Here is a 367-residue protein sequence, read N- to C-terminus: Alanine racemase (367 aa).

The Proton acceptor; specific for D-alanine role is filled by Lys-40. N6-(pyridoxal phosphate)lysine is present on Lys-40. Arg-136 lines the substrate pocket. Tyr-263 serves as the catalytic Proton acceptor; specific for L-alanine. Met-310 lines the substrate pocket.

This sequence belongs to the alanine racemase family. Requires pyridoxal 5'-phosphate as cofactor.

The catalysed reaction is L-alanine = D-alanine. It functions in the pathway amino-acid biosynthesis; D-alanine biosynthesis; D-alanine from L-alanine: step 1/1. Its function is as follows. Catalyzes the interconversion of L-alanine and D-alanine. May also act on other amino acids. This is Alanine racemase (alr) from Streptococcus pneumoniae serotype 19F (strain G54).